The primary structure comprises 641 residues: Methylenetetrahydrofolate reductase 2 (641 aa).

The Proton donor/acceptor role is filled by E20. Residues 20–25 (EYFPPK) and 52–53 (TW) contribute to the NAD(+) site. FAD is bound by residues 52-53 (TW), H81, 111-113 (RGD), Y153, D172, and K179. Substrate is bound at residue D113. Q190 contacts substrate.

Belongs to the methylenetetrahydrofolate reductase family. It depends on FAD as a cofactor.

It catalyses the reaction (6S)-5-methyl-5,6,7,8-tetrahydrofolate + NADP(+) = (6R)-5,10-methylene-5,6,7,8-tetrahydrofolate + NADPH + H(+). Its pathway is one-carbon metabolism; tetrahydrofolate interconversion. In terms of biological role, major methylenetetrahydrofolate reductase required to generate the methyl groups necessary for methionine synthetase to convert homocysteine to methionine. Performs 15 to 20 percent of the total methylenetetrahydrofolate reductase activity of the cells. The protein is Methylenetetrahydrofolate reductase 2 (met11) of Schizosaccharomyces pombe (strain 972 / ATCC 24843) (Fission yeast).